The sequence spans 743 residues: Sulfhydryl oxidase 1 (743 aa).

An N-terminal signal peptide occupies residues 1-42 (MWRRRARSGGGGGGGGGGAAPRCRWWPAVLALLAAALPAARS). The 124-residue stretch at 43-166 (RSLYSPSDPL…LRRAIITNLE (124 aa)) folds into the Thioredoxin domain. Catalysis depends on nucleophile residues C80 and C83. 2 disulfides stabilise this stretch: C80–C83 and C111–C120. N-linked (GlcNAc...) asparagine glycosylation is found at N254, N288, N295, N371, and N401. A disulfide bridge links C407 with C419. In terms of domain architecture, ERV/ALR sulfhydryl oxidase spans 410-513 (SEPHFRGYPC…EDPQFPKLQW (104 aa)). FAD-binding positions include R415, W422, H426, E461, H465, 488-495 (WSHHNEVN), K510, and W513. A disulfide bridge links C459 with C462. C519 and C522 are oxidised to a cystine. Positions 567-617 (ASARLSTAGLREKEEEERKEEEEEGEKETEKPHREGETGRPGSSELRRPSI) are disordered. Acidic residues predominate over residues 580-593 (EEEERKEEEEEGEK). Positions 594-604 (ETEKPHREGET) are enriched in basic and acidic residues. The helical transmembrane segment at 707-727 (SLCIALYFLSSMCLLGMYTFF) threads the bilayer.

The protein belongs to the quiescin-sulfhydryl oxidase (QSOX) family. Requires FAD as cofactor. N-glycosylated. O-glycosylated on Thr and Ser residues.

The protein localises to the golgi apparatus membrane. It localises to the secreted. The catalysed reaction is 2 R'C(R)SH + O2 = R'C(R)S-S(R)CR' + H2O2. Functionally, catalyzes the oxidation of sulfhydryl groups in peptide and protein thiols to disulfides with the reduction of oxygen to hydrogen peroxide. Plays a role in disulfide bond formation in a variety of extracellular proteins. In fibroblasts, required for normal incorporation of laminin into the extracellular matrix, and thereby for normal cell-cell adhesion and cell migration. The chain is Sulfhydryl oxidase 1 (QSOX1) from Gallus gallus (Chicken).